The primary structure comprises 201 residues: UPF0301 protein MAP_0045 (201 aa).

This sequence belongs to the UPF0301 (AlgH) family.

The protein is UPF0301 protein MAP_0045 of Mycolicibacterium paratuberculosis (strain ATCC BAA-968 / K-10) (Mycobacterium paratuberculosis).